Reading from the N-terminus, the 23-residue chain is PAWLVDCPCVGDDVNRLLARGEK.

Pro-1 is a propeptide. Positions 2–8 (AWLVDCP) form a cross-link, cyclopeptide (Ala-Pro). Residues 3-7 (WLVDC) constitute a cross-link (2'-cysteinyl-6'-hydroxytryptophan sulfoxide (Trp-Cys)). A propeptide spanning residues 9 to 23 (CVGDDVNRLLARGEK) is cleaved from the precursor.

The protein belongs to the MSDIN fungal toxin family. Processed by the macrocyclase-peptidase enzyme POPB to yield a toxic cyclic heptapeptide. POPB first removes 10 residues from the N-terminus. Conformational trapping of the remaining peptide forces the enzyme to release this intermediate rather than proceed to macrocyclization. The enzyme rebinds the remaining peptide in a different conformation and catalyzes macrocyclization of the N-terminal 7 residues.

In terms of biological role, major toxin that belongs to the bicyclic heptapeptides called phallotoxins. Although structurally related to amatoxins, phallotoxins have a different mode of action, which is the stabilization of F-actin. Phallotoxins are poisonous when administered parenterally, but not orally because of poor absorption. This chain is Phallacidin proprotein, found in Amanita fuliginea (East Asian brown death cap).